The sequence spans 164 residues: Arginine repressor (164 aa).

It belongs to the ArgR family.

It localises to the cytoplasm. Its pathway is amino-acid biosynthesis; L-arginine biosynthesis [regulation]. In terms of biological role, regulates arginine biosynthesis genes. The sequence is that of Arginine repressor from Mycobacterium avium (strain 104).